The chain runs to 217 residues: Cyclin-P2-1 (217 aa).

Belongs to the cyclin family. Cyclin U/P subfamily.

This is Cyclin-P2-1 (CYCP2-1) from Oryza sativa subsp. japonica (Rice).